Reading from the N-terminus, the 682-residue chain is Activating transcription factor 7-interacting protein 2 (682 aa).

Residues 120-148 form a disordered region; it reads SRTTESPSRVFTEEAKDSLNTSENDSEHQ. Polar residues predominate over residues 137–148; that stretch reads SLNTSENDSEHQ. The stretch at 328 to 378 forms a coiled coil; the sequence is EIYSINYELFDKKLKELNQRIGKTECRNKHEGIADKLLAKIAKLQRRIKTV. At Ser-416 the chain carries Phosphoserine. Composition is skewed to polar residues over residues 418 to 451 and 462 to 490; these read IEKS…VSES and ESPN…NSPN. Disordered regions lie at residues 418–491 and 513–538; these read IEKS…SPNA and NCNT…ETTP. 2 positions are modified to phosphoserine: Ser-488 and Ser-521. Residues 528-538 are compositionally biased toward polar residues; that stretch reads KAASNSKETTP. Residues 575–680 form the Fibronectin type-III domain; sequence PPQKPELKVK…IKSIPGFSEN (106 aa).

This sequence belongs to the MCAF family. Interacts with MBD1, SETDB1 and SP1. Probably forms a complex with SETDB1 and MBD1.

The protein localises to the nucleus. Functionally, recruiter that couples transcriptional factors to general transcription apparatus and thereby modulates transcription regulation and chromatin formation. Can both act as an activator or a repressor depending on the context. Mediates MBD1-dependent transcriptional repression, probably by recruiting complexes containing SETDB1. The complex formed with MBD1 and SETDB1 represses transcription and probably couples DNA methylation and histone H3 'Lys-9' trimethylation (H3K9me3) activity. The polypeptide is Activating transcription factor 7-interacting protein 2 (ATF7IP2) (Homo sapiens (Human)).